Consider the following 240-residue polypeptide: UDP-2,3-diacylglucosamine hydrolase (240 aa).

The Mn(2+) site is built by Asp8, His10, Asp41, Asn79, and His114. Position 79–80 (Asn79–Arg80) interacts with substrate. Residues Asp122, Ser160, Asn164, Lys167, and His195 each coordinate substrate. Mn(2+) contacts are provided by His195 and His197.

This sequence belongs to the LpxH family. Requires Mn(2+) as cofactor.

The protein localises to the cell inner membrane. It carries out the reaction UDP-2-N,3-O-bis[(3R)-3-hydroxytetradecanoyl]-alpha-D-glucosamine + H2O = 2-N,3-O-bis[(3R)-3-hydroxytetradecanoyl]-alpha-D-glucosaminyl 1-phosphate + UMP + 2 H(+). It participates in glycolipid biosynthesis; lipid IV(A) biosynthesis; lipid IV(A) from (3R)-3-hydroxytetradecanoyl-[acyl-carrier-protein] and UDP-N-acetyl-alpha-D-glucosamine: step 4/6. Functionally, hydrolyzes the pyrophosphate bond of UDP-2,3-diacylglucosamine to yield 2,3-diacylglucosamine 1-phosphate (lipid X) and UMP by catalyzing the attack of water at the alpha-P atom. Involved in the biosynthesis of lipid A, a phosphorylated glycolipid that anchors the lipopolysaccharide to the outer membrane of the cell. The polypeptide is UDP-2,3-diacylglucosamine hydrolase (Klebsiella pneumoniae subsp. pneumoniae (strain ATCC 700721 / MGH 78578)).